A 283-amino-acid chain; its full sequence is 4-diphosphocytidyl-2-C-methyl-D-erythritol kinase (283 aa).

Lys-10 is a catalytic residue. Residue 99–109 (PMGGGLGGGSS) coordinates ATP. Residue Asp-141 is part of the active site.

This sequence belongs to the GHMP kinase family. IspE subfamily. In terms of assembly, homodimer.

The catalysed reaction is 4-CDP-2-C-methyl-D-erythritol + ATP = 4-CDP-2-C-methyl-D-erythritol 2-phosphate + ADP + H(+). The protein operates within isoprenoid biosynthesis; isopentenyl diphosphate biosynthesis via DXP pathway; isopentenyl diphosphate from 1-deoxy-D-xylulose 5-phosphate: step 3/6. Catalyzes the phosphorylation of the position 2 hydroxy group of 4-diphosphocytidyl-2C-methyl-D-erythritol. The polypeptide is 4-diphosphocytidyl-2-C-methyl-D-erythritol kinase (Escherichia coli O127:H6 (strain E2348/69 / EPEC)).